The following is a 569-amino-acid chain: Urease subunit beta (569 aa).

In terms of domain architecture, Urease spans 131-569 (GGIDTHIHFI…VSLAQLFSIF (439 aa)). Positions 136, 138, and 219 each coordinate Ni(2+). N6-carboxylysine is present on Lys-219. His-221 is a substrate binding site. Positions 248 and 274 each coordinate Ni(2+). His-322 functions as the Proton donor in the catalytic mechanism. Residue Asp-362 participates in Ni(2+) binding.

Belongs to the metallo-dependent hydrolases superfamily. Urease alpha subunit family. In terms of assembly, heterohexamer of 3 UreA (alpha) and 3 UreB (beta) subunits. Four heterohexamers assemble to form a 16 nm dodecameric complex. The cofactor is Ni cation. In terms of processing, carboxylation allows a single lysine to coordinate two nickel ions.

It is found in the cytoplasm. It carries out the reaction urea + 2 H2O + H(+) = hydrogencarbonate + 2 NH4(+). It functions in the pathway nitrogen metabolism; urea degradation; CO(2) and NH(3) from urea (urease route): step 1/1. Its function is as follows. Ammonia produced by ureolysis increases the gastric pH thereby providing an environment permissive for colonization of the stomach. The protein is Urease subunit beta of Helicobacter pylori (strain J99 / ATCC 700824) (Campylobacter pylori J99).